The following is a 211-amino-acid chain: Uracil phosphoribosyltransferase (211 aa).

5-phospho-alpha-D-ribose 1-diphosphate is bound by residues arginine 79, arginine 104, and 131 to 139 (DPMLATGGS). Residues isoleucine 196 and 201–203 (GDA) contribute to the uracil site. Position 202 (aspartate 202) interacts with 5-phospho-alpha-D-ribose 1-diphosphate.

It belongs to the UPRTase family. It depends on Mg(2+) as a cofactor.

The enzyme catalyses UMP + diphosphate = 5-phospho-alpha-D-ribose 1-diphosphate + uracil. It participates in pyrimidine metabolism; UMP biosynthesis via salvage pathway; UMP from uracil: step 1/1. Its activity is regulated as follows. Allosterically activated by GTP. Functionally, catalyzes the conversion of uracil and 5-phospho-alpha-D-ribose 1-diphosphate (PRPP) to UMP and diphosphate. This Lactococcus lactis subsp. cremoris (strain SK11) protein is Uracil phosphoribosyltransferase.